The following is a 731-amino-acid chain: E3 ubiquitin-protein ligase SMURF1 (731 aa).

The C2 domain occupies 1-120 (MSNVVTRRGG…TGYQRLDLCK (120 aa)). The interval 210 to 235 (RVRGPEVREHVQTPQNRSHGFQSQDL) is disordered. A compositionally biased stretch (polar residues) spans 221-234 (QTPQNRSHGFQSQD). WW domains are found at residues 233–266 (QDLP…DPRI) and 279–312 (GSLP…DPRL). The region spanning 394–731 (RPKDLKKRLM…VEETSGFAVE (338 aa)) is the HECT domain. C699 acts as the Glycyl thioester intermediate in catalysis.

It localises to the cytoplasm. The protein resides in the cell membrane. It carries out the reaction S-ubiquitinyl-[E2 ubiquitin-conjugating enzyme]-L-cysteine + [acceptor protein]-L-lysine = [E2 ubiquitin-conjugating enzyme]-L-cysteine + N(6)-ubiquitinyl-[acceptor protein]-L-lysine.. Its pathway is protein modification; protein ubiquitination. Its function is as follows. E3 ubiquitin-protein ligase that acts as a negative regulator of BMP signaling pathway. Mediates ubiquitination and degradation of smad1 and smad5, 2 receptor-regulated SMADs specific for the BMP pathway. Promotes ubiquitination and subsequent proteasomal degradation of TRAF family members and rhoa. May play a role in dendrite formation by melanocytes. This chain is E3 ubiquitin-protein ligase SMURF1 (smurf1), found in Xenopus laevis (African clawed frog).